The sequence spans 334 residues: Putative B3 domain-containing protein At5g66980 (334 aa).

2 consecutive DNA-binding regions (TF-B3) follow at residues 8–105 and 218–317; these read LQFF…FAND and HPHF…VSGR.

The protein resides in the nucleus. The protein is Putative B3 domain-containing protein At5g66980 of Arabidopsis thaliana (Mouse-ear cress).